The sequence spans 126 residues: Holo-[acyl-carrier-protein] synthase (126 aa).

Residues Asp9 and Glu58 each contribute to the Mg(2+) site.

It belongs to the P-Pant transferase superfamily. AcpS family. Mg(2+) serves as cofactor.

The protein localises to the cytoplasm. The enzyme catalyses apo-[ACP] + CoA = holo-[ACP] + adenosine 3',5'-bisphosphate + H(+). Its function is as follows. Transfers the 4'-phosphopantetheine moiety from coenzyme A to a Ser of acyl-carrier-protein. The chain is Holo-[acyl-carrier-protein] synthase from Citrobacter koseri (strain ATCC BAA-895 / CDC 4225-83 / SGSC4696).